Here is a 113-residue protein sequence, read N- to C-terminus: DNA-directed RNA polymerase subunit omega (113 aa).

It belongs to the RNA polymerase subunit omega family. As to quaternary structure, the RNAP catalytic core consists of 2 alpha, 1 beta, 1 beta' and 1 omega subunit. When a sigma factor is associated with the core the holoenzyme is formed, which can initiate transcription.

The catalysed reaction is RNA(n) + a ribonucleoside 5'-triphosphate = RNA(n+1) + diphosphate. Functionally, promotes RNA polymerase assembly. Latches the N- and C-terminal regions of the beta' subunit thereby facilitating its interaction with the beta and alpha subunits. The chain is DNA-directed RNA polymerase subunit omega from Rhizorhabdus wittichii (strain DSM 6014 / CCUG 31198 / JCM 15750 / NBRC 105917 / EY 4224 / RW1) (Sphingomonas wittichii).